Consider the following 61-residue polypeptide: Large ribosomal subunit protein eL37 (61 aa).

The Zn(2+) site is built by Cys-20, Cys-23, Cys-35, and Cys-38. The C4-type zinc-finger motif lies at 20 to 38 (CRRCGRRAYHVRKKRCAAC).

This sequence belongs to the eukaryotic ribosomal protein eL37 family. The cofactor is Zn(2+).

In terms of biological role, binds to the 23S rRNA. The polypeptide is Large ribosomal subunit protein eL37 (rpl37e) (Methanocaldococcus jannaschii (strain ATCC 43067 / DSM 2661 / JAL-1 / JCM 10045 / NBRC 100440) (Methanococcus jannaschii)).